We begin with the raw amino-acid sequence, 281 residues long: TIP41-like protein (281 aa).

The protein belongs to the TIP41 family.

This Caenorhabditis elegans protein is TIP41-like protein.